Here is a 506-residue protein sequence, read N- to C-terminus: Histidine ammonia-lyase (506 aa).

The segment at residues 143 to 145 is a cross-link (5-imidazolinone (Ala-Gly)); the sequence is ASG. Residue S144 is modified to 2,3-didehydroalanine (Ser).

Belongs to the PAL/histidase family. Post-translationally, contains an active site 4-methylidene-imidazol-5-one (MIO), which is formed autocatalytically by cyclization and dehydration of residues Ala-Ser-Gly.

It is found in the cytoplasm. It carries out the reaction L-histidine = trans-urocanate + NH4(+). It participates in amino-acid degradation; L-histidine degradation into L-glutamate; N-formimidoyl-L-glutamate from L-histidine: step 1/3. The sequence is that of Histidine ammonia-lyase from Enterobacter sp. (strain 638).